Here is a 113-residue protein sequence, read N- to C-terminus: Hydrogenase maturation factor HypA (113 aa).

Histidine 2 contributes to the Ni(2+) binding site. Cysteine 73, cysteine 75, cysteine 89, and cysteine 92 together coordinate Zn(2+).

It belongs to the HypA/HybF family.

In terms of biological role, involved in the maturation of [NiFe] hydrogenases. Required for nickel insertion into the metal center of the hydrogenase. This chain is Hydrogenase maturation factor HypA, found in Methanocella arvoryzae (strain DSM 22066 / NBRC 105507 / MRE50).